The sequence spans 276 residues: Secretagogin (276 aa).

6 EF-hand domains span residues 12–47 (LDAAGFWQVWQRFDVEEKGYIEEKELDAFFYHMLTK), 71–93 (DVSKDGCIQMKELAGMFLSEDEN), 105–140 (DSSVEFMRIWRKYDADSSGFISAAELCNFLRDLFLH), 149–184 (KLEEYTGTMMKIFDKNKDGRLDLNDLARILALQENF), 197–232 (ERKRDFEKIFAHYDVSKTGALEGPEVDGFVKDMMEL), and 240–276 (VDLDKFREILLRHCDVNKDGKIQKSELALCLGLKINP). Residues Asp71, Ser73, Asp75, Cys77, Glu82, Asp118, Asp120, Ser122, Glu129, Asp162, Asn164, Asp166, Arg168, Asp173, Asp210, Ser212, Thr214, Glu221, Asp254, Asn256, Asp258, Lys260, and Glu265 each contribute to the Ca(2+) site.

The protein resides in the cytoplasm. Its subcellular location is the secreted. The protein localises to the cytoplasmic vesicle. It localises to the secretory vesicle membrane. This Bos taurus (Bovine) protein is Secretagogin (SCGN).